A 398-amino-acid polypeptide reads, in one-letter code: MAKLTVKDVDLKGKKVLVRVDFNVPLKDGVITNDNRITAALPTIKYIIEQGGRAILFSHLGRVKEEADKAGKSLAPVAADLAAKLGQDVVFPGVTRGAELEAAINALEDGQVLLVENTRYEDVDGKKESKNDPELGKYWASLGDGIFVNDAFGTAHRAHASNVGISANVEKAVAGFLLENEIAYIQEAVETPERPFVAILGGSKVSDKIGVIENLLEKADNVLIGGGMTYTFYKAQGIEIGNSLVEEDKLDVAKALLEKANGKLILPVDSKEANAFAGYTEVRDTEGEAVSEGFLGLDIGPKSIAKFDEALTGAKTVVWNGPMGVFENPDFQAGTIGVMDAIVKQPGVKSIIGGGDSAAAAINLGRADKFSWISTGGGASMELLEGKVLPGLAALTEK.

Residues 21–23 (DFN), Arg-36, 59–62 (HLGR), Arg-119, and Arg-157 contribute to the substrate site. Residues Lys-208, Gly-296, Glu-327, and 354-357 (GGDS) each bind ATP.

Belongs to the phosphoglycerate kinase family. Monomer.

The protein resides in the cytoplasm. It carries out the reaction (2R)-3-phosphoglycerate + ATP = (2R)-3-phospho-glyceroyl phosphate + ADP. It participates in carbohydrate degradation; glycolysis; pyruvate from D-glyceraldehyde 3-phosphate: step 2/5. This chain is Phosphoglycerate kinase, found in Streptococcus pneumoniae serotype 4 (strain ATCC BAA-334 / TIGR4).